The sequence spans 182 residues: Protein LURP-one-related 7 (182 aa).

Belongs to the LOR family.

In terms of biological role, might be related to the phospholipid scramblase and tubby-like superfamily of membrane tethered transcription factors. This chain is Protein LURP-one-related 7, found in Arabidopsis thaliana (Mouse-ear cress).